The following is a 387-amino-acid chain: Beta-citrylglutamate synthase B (387 aa).

The ATP-grasp domain occupies 119-304; it reads FQELAGHGVP…VAGIIADYAA (186 aa). ATP is bound by residues Lys-158, 193 to 203, and Arg-219; that span reads QKYIKESHGRD. The Mg(2+) site is built by Asp-264, Glu-277, and Asn-279. Mn(2+)-binding residues include Asp-264, Glu-277, and Asn-279. Residues 325 to 361 are disordered; the sequence is ASETSEPELGPPASAAVDNMSASSSSVDSDPESTTER. Over residues 337-352 the composition is skewed to low complexity; that stretch reads ASAAVDNMSASSSSVD.

This sequence belongs to the RimK family. The cofactor is Mg(2+). Requires Mn(2+) as cofactor. Strongly expressed in brain and testis. Expressed in eyes, thymus, lung, kidney, skeletal muscle, spleen, skin and heart. Expressed in neurons of the neocortex, the gray matter and Purkinje cells.

The protein resides in the cytoplasm. The catalysed reaction is citrate + L-glutamate + ATP = beta-citrylglutamate + ADP + phosphate + H(+). It carries out the reaction N-acetyl-L-aspartate + L-glutamate + ATP = N-acetyl-L-aspartyl-L-glutamate + ADP + phosphate + H(+). In terms of biological role, catalyzes the synthesis of beta-citryl-L-glutamate and N-acetyl-L-aspartyl-L-glutamate. Beta-citryl-L-glutamate is synthesized more efficiently than N-acetyl-L-aspartyl-L-glutamate. This chain is Beta-citrylglutamate synthase B (Rimklb), found in Mus musculus (Mouse).